We begin with the raw amino-acid sequence, 491 residues long: Probable cobyric acid synthase (491 aa).

The GATase cobBQ-type domain maps to P252–F444. The active-site Nucleophile is C330. Residue H436 is part of the active site.

The protein belongs to the CobB/CobQ family. CobQ subfamily.

It participates in cofactor biosynthesis; adenosylcobalamin biosynthesis. Its function is as follows. Catalyzes amidations at positions B, D, E, and G on adenosylcobyrinic A,C-diamide. NH(2) groups are provided by glutamine, and one molecule of ATP is hydrogenolyzed for each amidation. The polypeptide is Probable cobyric acid synthase (Methanococcus vannielii (strain ATCC 35089 / DSM 1224 / JCM 13029 / OCM 148 / SB)).